Consider the following 1228-residue polypeptide: Reverse gyrase (1228 aa).

The RG N-terminal-type zinc finger occupies 1–41 (MEVPLVAYLHSCPNCGGPITSDRLASGLPCRECLPDGAKAG). Zn(2+) contacts are provided by Cys-12, Cys-15, Cys-30, and Cys-33. ATP-binding positions include Gln-88 and 105–112 (APTGSGKT). The Helicase ATP-binding domain maps to 92–255 (ARRFVRGKSF…NLTKQLRKAE (164 aa)). The DEAD box signature appears at 211 to 214 (DDVD). The topoisomerase I stretch occupies residues 631-1228 (DLMRTILMVV…RKEVLPHLAS (598 aa)). A Toprim domain is found at 635–809 (TILMVVESPT…DIRRVEFHEV (175 aa)). 2 residues coordinate Mg(2+): Glu-641 and Asp-778. In terms of domain architecture, Topo IA-type catalytic spans 825–1223 (NFSLVKAQIV…LYDEFRKEVL (399 aa)). Tyr-967 (O-(5'-phospho-DNA)-tyrosine intermediate) is an active-site residue.

It in the N-terminal section; belongs to the DEAD box helicase family. DDVD subfamily. This sequence in the C-terminal section; belongs to the type IA topoisomerase family. In terms of assembly, monomer. Zn(2+) serves as cofactor. It depends on Mg(2+) as a cofactor.

The protein resides in the cytoplasm. It catalyses the reaction ATP + H2O = ADP + phosphate + H(+). Modifies the topological state of DNA by introducing positive supercoils in an ATP-dependent process, increasing the linking number in steps of +1. Binds to single-stranded DNA, transiently cleaves and then rejoins the ends, introducing a positive supercoil in the process. The scissile phosphodiester is attacked by the catalytic tyrosine of the enzyme, resulting in the formation of a DNA-(5'-phosphotyrosyl)-enzyme intermediate. Probably involved in rewinding DNA strands in regions of the chromosome that have opened up to allow replication, transcription, DNA repair and/or for DNA protection. This is Reverse gyrase from Pyrobaculum aerophilum (strain ATCC 51768 / DSM 7523 / JCM 9630 / CIP 104966 / NBRC 100827 / IM2).